The following is a 75-amino-acid chain: Defensin-like protein 58 (75 aa).

An N-terminal signal peptide occupies residues 1 to 23; sequence MNITKRYVVIFFLVMLTKSLSNS. 4 cysteine pairs are disulfide-bonded: cysteine 39-cysteine 73, cysteine 43-cysteine 66, cysteine 52-cysteine 71, and cysteine 56-cysteine 72.

It belongs to the DEFL family.

Its subcellular location is the secreted. The sequence is that of Defensin-like protein 58 from Arabidopsis thaliana (Mouse-ear cress).